A 282-amino-acid polypeptide reads, in one-letter code: 4-hydroxybenzoate octaprenyltransferase (282 aa).

9 consecutive transmembrane segments (helical) span residues Ile-17 to Phe-37, Ile-40 to Ile-60, Ala-90 to Ile-110, Phe-113 to Leu-133, Ala-135 to Ser-155, Phe-163 to Met-183, Leu-207 to Lys-227, Trp-231 to Ile-251, and Ala-262 to Ile-282.

The protein belongs to the UbiA prenyltransferase family. Requires Mg(2+) as cofactor.

The protein localises to the cell inner membrane. The catalysed reaction is all-trans-octaprenyl diphosphate + 4-hydroxybenzoate = 4-hydroxy-3-(all-trans-octaprenyl)benzoate + diphosphate. It participates in cofactor biosynthesis; ubiquinone biosynthesis. Functionally, catalyzes the prenylation of para-hydroxybenzoate (PHB) with an all-trans polyprenyl group. Mediates the second step in the final reaction sequence of ubiquinone-8 (UQ-8) biosynthesis, which is the condensation of the polyisoprenoid side chain with PHB, generating the first membrane-bound Q intermediate 3-octaprenyl-4-hydroxybenzoate. This is 4-hydroxybenzoate octaprenyltransferase from Legionella pneumophila (strain Paris).